Consider the following 908-residue polypeptide: UPF0182 protein NT01CX_0852 (908 aa).

The next 7 membrane-spanning stretches (helical) occupy residues 8–28, 47–67, 96–116, 157–177, 209–229, 253–273, and 280–300; these read IGLF…VNVI, FTSV…AIKT, IINA…SLGY, LLSL…FLNI, LAIL…IKAW, FYIA…FSIL, and IISC…VSGA.

The protein belongs to the UPF0182 family.

The protein localises to the cell membrane. In Clostridium novyi (strain NT), this protein is UPF0182 protein NT01CX_0852.